Here is a 165-residue protein sequence, read N- to C-terminus: Large ribosomal subunit protein uL10 (165 aa).

This sequence belongs to the universal ribosomal protein uL10 family. As to quaternary structure, part of the ribosomal stalk of the 50S ribosomal subunit. The N-terminus interacts with L11 and the large rRNA to form the base of the stalk. The C-terminus forms an elongated spine to which L12 dimers bind in a sequential fashion forming a multimeric L10(L12)X complex.

Functionally, forms part of the ribosomal stalk, playing a central role in the interaction of the ribosome with GTP-bound translation factors. This is Large ribosomal subunit protein uL10 from Sodalis glossinidius (strain morsitans).